Consider the following 233-residue polypeptide: Sugar fermentation stimulation protein homolog (233 aa).

This sequence belongs to the SfsA family.

In Acetivibrio thermocellus (strain ATCC 27405 / DSM 1237 / JCM 9322 / NBRC 103400 / NCIMB 10682 / NRRL B-4536 / VPI 7372) (Clostridium thermocellum), this protein is Sugar fermentation stimulation protein homolog.